Here is a 530-residue protein sequence, read N- to C-terminus: Copine-D (530 aa).

2 C2 domains span residues M1 to M122 and L130 to I248. Residues D25, D31, D85, D87, and D100 each contribute to the Ca(2+) site. In terms of domain architecture, VWFA spans N289 to I507.

Belongs to the copine family. Ca(2+) is required as a cofactor.

The protein is Copine-D (cpnD) of Dictyostelium discoideum (Social amoeba).